The chain runs to 323 residues: Olfactory receptor 5P58 (323 aa).

At 1–28 the chain is on the extracellular side; it reads MAFLEDGNHTAVTEFILVGLTDDPVLKV. An N-linked (GlcNAc...) asparagine glycan is attached at asparagine 8. The chain crosses the membrane as a helical span at residues 29–49; sequence ILFTIILCIYLVTVSGNLSTI. Topologically, residues 50–57 are cytoplasmic; it reads LLIRVSSQ. The helical transmembrane segment at 58–78 threads the bilayer; the sequence is LHHPMYFFLSHLASVDLGYSS. Topologically, residues 79-102 are extracellular; it reads SVTPNMLINFLAENNTISYIGCSI. Asparagine 92 carries an N-linked (GlcNAc...) asparagine glycan. Cysteine 100 and cysteine 192 are joined by a disulfide. The helical transmembrane segment at 103-123 threads the bilayer; sequence QFGSATFFGVLECFLLAVMAY. Residues 124–136 lie on the Cytoplasmic side of the membrane; the sequence is DRFVAICNPLLYS. Residues 137-157 traverse the membrane as a helical segment; that stretch reads IKMSTQVCVKLVVGSYIGSSL. The Extracellular portion of the chain corresponds to 158 to 199; it reads NASFVTVSIFNLLFCGPNKINHFFCDFDPLIELSCSDVSVPV. A helical membrane pass occupies residues 200 to 220; sequence AVTSCSAGLITMITVFVIAVS. The Cytoplasmic portion of the chain corresponds to 221–240; the sequence is YTYILITVLKMRSTEGRHKA. A helical transmembrane segment spans residues 241-261; sequence FSTCTSHLTAVTLFYGTVTFI. The Extracellular portion of the chain corresponds to 262 to 274; that stretch reads YVMPKSNYSTDQN. An N-linked (GlcNAc...) asparagine glycan is attached at asparagine 268. Residues 275-295 form a helical membrane-spanning segment; sequence KVVSVFYMVVIPMLNPLIYSL. The Cytoplasmic portion of the chain corresponds to 296–323; the sequence is RNNEIKGALKRQLGKKIFSQSNILFCKS.

Belongs to the G-protein coupled receptor 1 family.

The protein resides in the cell membrane. Potential odorant receptor. This Mus musculus (Mouse) protein is Olfactory receptor 5P58.